The chain runs to 345 residues: uncharacterized protein (345 aa).

Over residues 1-13 (MSKPNTETISVNI) the composition is skewed to polar residues. Residues 1 to 23 (MSKPNTETISVNIPESEGVPLPD) form a disordered region. Positions 283–316 (SLKQRTNILKKQGETLKKNVEDINKDTSNLKRHA) form a coiled coil.

Its subcellular location is the virion. This is an uncharacterized protein from Acanthamoeba polyphaga mimivirus (APMV).